Here is a 337-residue protein sequence, read N- to C-terminus: P2Y purinoceptor 14 (337 aa).

Residues 1-28 (MNATSVPPAEGSCPSNALITKQIIPMLY) are Extracellular-facing. Residue asparagine 2 is glycosylated (N-linked (GlcNAc...) asparagine). The chain crosses the membrane as a helical span at residues 29–49 (FVVFVAGILLNGMSGWVFFYV). Residues 50–54 (PSSKS) are Cytoplasmic-facing. Residues 55–75 (FIVYLKNIVIADFLMSLTFPF) traverse the membrane as a helical segment. Over 76 to 95 (KILGDLGLGLWQVKVFVCRV) the chain is Extracellular. Residues cysteine 93 and cysteine 171 are joined by a disulfide bond. Residues 96-116 (SAVLFYINMYVSIVFFGLIGF) traverse the membrane as a helical segment. Residues 117-138 (DRYYKIVKPLLTSFIQSISYSK) lie on the Cytoplasmic side of the membrane. Residues 139–159 (LLSVLVWSLTLLIALPNMILT) traverse the membrane as a helical segment. Residues 160–187 (NRNVTEATRVKCMDLKSDLGLKWHKASS) lie on the Extracellular side of the membrane. A glycan (N-linked (GlcNAc...) asparagine) is linked at asparagine 162. The chain crosses the membrane as a helical span at residues 188–208 (YIFVGIFWIVFLSLIIFYTAI). At 209 to 233 (TKKIFKSHFKSRKNSVSVKKKSSRN) the chain is on the cytoplasmic side. The chain crosses the membrane as a helical span at residues 234–254 (IFSIMFVFFICFVPYHIARIP). At 255-277 (YTQSQTEAHYSCQSKQILFYVKE) the chain is on the extracellular side. Residues 278–298 (FSLLLSAANVCLDPIIYFFLC) traverse the membrane as a helical segment. The Cytoplasmic segment spans residues 299–337 (QPFREVLCKKLHIQLKTQHDSETSKIKRENIIQESTDTL).

It belongs to the G-protein coupled receptor 1 family.

It is found in the cell membrane. Functionally, receptor for UDP-glucose and other UDP-sugar coupled to G-proteins. Not activated by ATP, ADP, UTP or ATP. This chain is P2Y purinoceptor 14 (P2RY14), found in Bos taurus (Bovine).